Consider the following 1046-residue polypeptide: Piwi-like protein 2 (1046 aa).

Residues 1-12 (MDPKRPTFPSPP) show a composition bias toward pro residues. Residues 1-35 (MDPKRPTFPSPPGVIRAPWQQSTEDQSQLLDQPSL) form a disordered region. Residues 19 to 31 (WQQSTEDQSQLLD) show a composition bias toward polar residues. Residues 462-575 (SVLDVMNLIY…LLPELSFMTG (114 aa)) enclose the PAZ domain. The 292-residue stretch at 741–1032 (LVVCIMTGNR…LAFLSGQYLH (292 aa)) folds into the Piwi domain. Residues Asp818, Glu856, Asp888, and His1021 contribute to the active site.

It belongs to the argonaute family. Piwi subfamily. In terms of assembly, component of the PET complex. Requires Mg(2+) as cofactor. Post-translationally, methylated on arginine residues; required for the interaction with Tudor domain-containing protein and subsequent localization to the meiotic nuage, also named P granule. As to expression, detected in primordial germ cells (PGCs) from 3 dpf. In adult, it is found in both the female and male gonad. In the ovary, it is present in all stages of germ cell differentiation. In testis, it is present in mitotic and meiotic germ cells. No protein has been detected in the fully differentiated sperm cell.

The protein localises to the cytoplasm. It is found in the nucleus. In terms of biological role, endoribonuclease that plays a central role during spermatogenesis by repressing transposable elements and preventing their mobilization, which is essential for the germline integrity. Plays an essential role in germ cell differentiation and meiosis, independently of the function in transposable elements repression. Acts via the piRNA metabolic process, which mediates the repression of transposable elements during meiosis by forming complexes composed of piRNAs and Piwi proteins and govern the methylation and subsequent repression of transposons. During piRNA biosynthesis, plays a key role in the piRNA amplification loop, also named ping-pong amplification cycle, by acting as a 'slicer-competent' piRNA endoribonuclease that cleaves primary piRNAs, which are then loaded onto 'slicer-incompetent' piwil4. Piwil2 slicing produces a pre-miRNA intermediate, which is then processed in mature piRNAs, and as well as a 16 nucleotide by-product that is degraded. Required for piwil4/miwi2 nuclear localization and association with secondary piRNAs antisense. Represses circadian rhythms by promoting the stability and activity of core clock components BMAL1 and CLOCK. In Danio rerio (Zebrafish), this protein is Piwi-like protein 2 (piwil2).